We begin with the raw amino-acid sequence, 330 residues long: Small ribosomal subunit protein uS2 (330 aa).

The protein belongs to the universal ribosomal protein uS2 family.

The chain is Small ribosomal subunit protein uS2 from Rhodopseudomonas palustris (strain BisA53).